The sequence spans 340 residues: Phosphate acyltransferase (340 aa).

The protein belongs to the PlsX family. Homodimer. Probably interacts with PlsY.

It localises to the cytoplasm. The enzyme catalyses a fatty acyl-[ACP] + phosphate = an acyl phosphate + holo-[ACP]. It participates in lipid metabolism; phospholipid metabolism. Its function is as follows. Catalyzes the reversible formation of acyl-phosphate (acyl-PO(4)) from acyl-[acyl-carrier-protein] (acyl-ACP). This enzyme utilizes acyl-ACP as fatty acyl donor, but not acyl-CoA. The protein is Phosphate acyltransferase of Trichodesmium erythraeum (strain IMS101).